Consider the following 294-residue polypeptide: Segregation and condensation protein A (294 aa).

Belongs to the ScpA family. Component of a cohesin-like complex composed of ScpA, ScpB and the Smc homodimer, in which ScpA and ScpB bind to the head domain of Smc. The presence of the three proteins is required for the association of the complex with DNA.

It localises to the cytoplasm. Participates in chromosomal partition during cell division. May act via the formation of a condensin-like complex containing Smc and ScpB that pull DNA away from mid-cell into both cell halves. The polypeptide is Segregation and condensation protein A (Ureaplasma parvum serovar 3 (strain ATCC 700970)).